Consider the following 331-residue polypeptide: 4-hydroxythreonine-4-phosphate dehydrogenase (331 aa).

His-137 and Thr-138 together coordinate substrate. Residues His-167, His-212, and His-267 each coordinate a divalent metal cation. Lys-275, Asn-284, and Arg-293 together coordinate substrate.

It belongs to the PdxA family. As to quaternary structure, homodimer. Zn(2+) is required as a cofactor. Requires Mg(2+) as cofactor. It depends on Co(2+) as a cofactor.

It is found in the cytoplasm. It carries out the reaction 4-(phosphooxy)-L-threonine + NAD(+) = 3-amino-2-oxopropyl phosphate + CO2 + NADH. The protein operates within cofactor biosynthesis; pyridoxine 5'-phosphate biosynthesis; pyridoxine 5'-phosphate from D-erythrose 4-phosphate: step 4/5. Its function is as follows. Catalyzes the NAD(P)-dependent oxidation of 4-(phosphooxy)-L-threonine (HTP) into 2-amino-3-oxo-4-(phosphooxy)butyric acid which spontaneously decarboxylates to form 3-amino-2-oxopropyl phosphate (AHAP). This Yersinia enterocolitica serotype O:8 / biotype 1B (strain NCTC 13174 / 8081) protein is 4-hydroxythreonine-4-phosphate dehydrogenase.